A 191-amino-acid polypeptide reads, in one-letter code: Ion-translocating oxidoreductase complex subunit B (191 aa).

Residues 1 to 26 (MSAVLIAVLALLALCLLGGAILGFAA) form a hydrophobic region. The 4Fe-4S domain maps to 32 to 90 (EGDPIAEQINALLPQTQCGQCGYPGCKPYAEAIAGGDKINKCPPGGEATIQALADLLDV). Positions 49, 52, 57, 73, 114, 117, 120, 124, 144, 147, 150, and 154 each coordinate [4Fe-4S] cluster. 4Fe-4S ferredoxin-type domains are found at residues 105–134 (MVAY…GAAR) and 135–164 (QMHT…MIEV).

Belongs to the 4Fe4S bacterial-type ferredoxin family. RnfB subfamily. As to quaternary structure, the complex is composed of six subunits: RnfA, RnfB, RnfC, RnfD, RnfE and RnfG. The cofactor is [4Fe-4S] cluster.

It is found in the cell inner membrane. In terms of biological role, part of a membrane-bound complex that couples electron transfer with translocation of ions across the membrane. This is Ion-translocating oxidoreductase complex subunit B from Stutzerimonas stutzeri (strain A1501) (Pseudomonas stutzeri).